Consider the following 452-residue polypeptide: Trigger factor (452 aa).

Positions glycine 162–proline 247 constitute a PPIase FKBP-type domain. The interval alanine 427–lysine 452 is disordered.

Belongs to the FKBP-type PPIase family. Tig subfamily.

Its subcellular location is the cytoplasm. The catalysed reaction is [protein]-peptidylproline (omega=180) = [protein]-peptidylproline (omega=0). Involved in protein export. Acts as a chaperone by maintaining the newly synthesized protein in an open conformation. Functions as a peptidyl-prolyl cis-trans isomerase. This Lactobacillus helveticus (strain DPC 4571) protein is Trigger factor.